The sequence spans 334 residues: L-lactate dehydrogenase B-B chain (334 aa).

NAD(+) is bound by residues 30-58 (GQVG…VEDK) and Arg-100. Residues Arg-107, Asn-139, and Arg-170 each contribute to the substrate site. Residue Asn-139 participates in NAD(+) binding. Catalysis depends on His-194, which acts as the Proton acceptor. Thr-249 lines the substrate pocket.

It belongs to the LDH/MDH superfamily. LDH family. As to quaternary structure, homotetramer.

The protein resides in the cytoplasm. The catalysed reaction is (S)-lactate + NAD(+) = pyruvate + NADH + H(+). It functions in the pathway fermentation; pyruvate fermentation to lactate; (S)-lactate from pyruvate: step 1/1. This is L-lactate dehydrogenase B-B chain from Danio rerio (Zebrafish).